A 215-amino-acid chain; its full sequence is Thiopurine S-methyltransferase (215 aa).

Residues tryptophan 10, leucine 45, glutamate 66, and arginine 123 each contribute to the S-adenosyl-L-methionine site.

The protein belongs to the class I-like SAM-binding methyltransferase superfamily. TPMT family.

It localises to the cytoplasm. The enzyme catalyses S-adenosyl-L-methionine + a thiopurine = S-adenosyl-L-homocysteine + a thiopurine S-methylether.. The chain is Thiopurine S-methyltransferase from Pseudomonas putida (strain W619).